The primary structure comprises 106 residues: Large ribosomal subunit protein uL23 (106 aa).

Belongs to the universal ribosomal protein uL23 family. In terms of assembly, part of the 50S ribosomal subunit. Contacts protein L29, and trigger factor when it is bound to the ribosome.

Its function is as follows. One of the early assembly proteins it binds 23S rRNA. One of the proteins that surrounds the polypeptide exit tunnel on the outside of the ribosome. Forms the main docking site for trigger factor binding to the ribosome. The chain is Large ribosomal subunit protein uL23 from Neisseria meningitidis serogroup A / serotype 4A (strain DSM 15465 / Z2491).